A 218-amino-acid polypeptide reads, in one-letter code: MRLILLGPPGAGKGTQAAFLTQHYGIPQISTGNMLRAAVKAGTPLGLEAKKVMDAGGLVSDDLIIGLVRDRLTQPDCANGYLFDGFPRTIPQADALKSAGIALDYVVEIEVPESDIIERMSGRRVHPASGRSYHVRFNPPKAEGVDDVTGEPLVQRDDDREETVRHRLNVYQNQTRPLVDYYSSWAQSDAAAAPKYRKISGVGSVDEIKSRLSQALQS.

ATP is bound at residue 10–15; it reads GAGKGT. Residues 30–59 form an NMP region; the sequence is STGNMLRAAVKAGTPLGLEAKKVMDAGGLV. Residues T31, R36, 57-59, 85-88, and Q92 contribute to the AMP site; these read GLV and GFPR. Residues 122 to 159 are LID; sequence GRRVHPASGRSYHVRFNPPKAEGVDDVTGEPLVQRDDD. Residues R123 and 132–133 contribute to the ATP site; that span reads SY. Residues R156 and R167 each coordinate AMP. G203 contributes to the ATP binding site.

Belongs to the adenylate kinase family. As to quaternary structure, monomer.

It is found in the cytoplasm. The catalysed reaction is AMP + ATP = 2 ADP. The protein operates within purine metabolism; AMP biosynthesis via salvage pathway; AMP from ADP: step 1/1. Catalyzes the reversible transfer of the terminal phosphate group between ATP and AMP. Plays an important role in cellular energy homeostasis and in adenine nucleotide metabolism. In Bordetella parapertussis (strain 12822 / ATCC BAA-587 / NCTC 13253), this protein is Adenylate kinase.